We begin with the raw amino-acid sequence, 380 residues long: UDP-N-acetylglucosamine 2-epimerase (380 aa).

The protein belongs to the UDP-N-acetylglucosamine 2-epimerase family.

It is found in the cytoplasm. It carries out the reaction UDP-N-acetyl-alpha-D-glucosamine = UDP-N-acetyl-alpha-D-mannosamine. It participates in cell wall biogenesis; poly(glycerol phosphate) teichoic acid biosynthesis. In terms of biological role, catalyzes the conversion of UDP-N-acetylglucosamine into UDP-N-acetylmannosamine, a precursor of the teichoic acid linkage unit. In Bacillus subtilis (strain 168), this protein is UDP-N-acetylglucosamine 2-epimerase (mnaA).